Consider the following 320-residue polypeptide: Methionyl-tRNA formyltransferase (320 aa).

A (6S)-5,6,7,8-tetrahydrofolate-binding site is contributed by 117-120; it reads SLLP.

The protein belongs to the Fmt family.

It carries out the reaction L-methionyl-tRNA(fMet) + (6R)-10-formyltetrahydrofolate = N-formyl-L-methionyl-tRNA(fMet) + (6S)-5,6,7,8-tetrahydrofolate + H(+). Attaches a formyl group to the free amino group of methionyl-tRNA(fMet). The formyl group appears to play a dual role in the initiator identity of N-formylmethionyl-tRNA by promoting its recognition by IF2 and preventing the misappropriation of this tRNA by the elongation apparatus. The chain is Methionyl-tRNA formyltransferase from Bordetella petrii (strain ATCC BAA-461 / DSM 12804 / CCUG 43448).